A 98-amino-acid polypeptide reads, in one-letter code: DNA-binding protein Fis (98 aa).

A DNA-binding region (H-T-H motif) is located at residues 74–93 (QTRAALMMGINRGTLRKKLK).

It belongs to the transcriptional regulatory Fis family. As to quaternary structure, homodimer.

Its function is as follows. Activates ribosomal RNA transcription. Plays a direct role in upstream activation of rRNA promoters. In Pectobacterium atrosepticum (strain SCRI 1043 / ATCC BAA-672) (Erwinia carotovora subsp. atroseptica), this protein is DNA-binding protein Fis.